We begin with the raw amino-acid sequence, 330 residues long: Spondin-2 (330 aa).

Positions 1 to 25 (MENVSFSLDRTLWVFLLAMLGSTAG) are cleaved as a signal peptide. A Spondin domain is found at 30–220 (GESVCTARPL…EITASSPSHP (191 aa)). Cysteine 34 and cysteine 170 form a disulfide bridge. A divalent metal cation is bound at residue glutamate 140. 3 residues coordinate Ca(2+): aspartate 159, aspartate 187, and aspartate 191. In terms of domain architecture, TSP type-1 spans 276–330 (DCEVSLWSSWGLCGGPCGKLGAKSRTRYVRVQPANNGTPCPELEEEAECAPDNCV). Tryptophan 282 is a glycosylation site (C-linked (Man) tryptophan).

In terms of assembly, monomer. Interacts with integrin. As to expression, abundantly expressed in the developing hippocampus.

The protein resides in the secreted. Its subcellular location is the extracellular space. It localises to the extracellular matrix. Its function is as follows. Cell adhesion protein that promotes adhesion and outgrowth of hippocampal embryonic neurons. Binds directly to bacteria and their components and functions as an opsonin for macrophage phagocytosis of bacteria. Essential in the initiation of the innate immune response and represents a unique pattern-recognition molecule in the ECM for microbial pathogens. This is Spondin-2 (Spon2) from Rattus norvegicus (Rat).